Consider the following 530-residue polypeptide: uncharacterized protein (530 aa).

Belongs to the protein kinase superfamily. ADCK protein kinase family.

This is an uncharacterized protein from Clostridium pasteurianum.